The primary structure comprises 664 residues: Zinc finger protein 710 (664 aa).

Residues K110 and K113 each participate in a glycyl lysine isopeptide (Lys-Gly) (interchain with G-Cter in SUMO2) cross-link. The tract at residues 121-141 is disordered; it reads VYEVSVPGDDKDAGPAEAPAE. 3 consecutive C2H2-type zinc fingers follow at residues 295-317, 323-345, and 351-373; these read WQCR…ILGH, HSCP…LLTH, and HKCQ…MLLH. A Glycyl lysine isopeptide (Lys-Gly) (interchain with G-Cter in SUMO2) cross-link involves residue K377. C2H2-type zinc fingers lie at residues 379-401, 407-429, 435-457, 463-485, 491-513, 519-541, 547-569, and 575-598; these read YSCH…EVKH, HVCV…LASH, YQCL…MLKH, FVCT…SLTH, FKCE…MLIH, YQCH…MIVH, FKCK…MHLH, and FKCP…KVKH.

The protein belongs to the krueppel C2H2-type zinc-finger protein family.

It localises to the nucleus. In terms of biological role, may be involved in transcriptional regulation. This is Zinc finger protein 710 (ZNF710) from Homo sapiens (Human).